The primary structure comprises 545 residues: CTP synthase (545 aa).

Residues 1–265 form an amidoligase domain region; the sequence is MNGIKHIFIT…DKFVIKHLDL (265 aa). Residue Ser-15 participates in CTP binding. Ser-15 is a UTP binding site. Residues 16–21 and Asp-73 each bind ATP; that span reads SIGKGL. Asp-73 and Glu-141 together coordinate Mg(2+). CTP is bound by residues 148–150, 188–193, and Lys-224; these read DIE and KTKPTQ. Residues 188–193 and Lys-224 contribute to the UTP site; that span reads KTKPTQ. The Glutamine amidotransferase type-1 domain occupies 290 to 534; it reads EIAIIGKYTG…VAAALARKEI (245 aa). L-glutamine is bound at residue Gly-349. The active-site Nucleophile; for glutamine hydrolysis is the Cys-376. Residues 377 to 380, Glu-400, and Arg-460 contribute to the L-glutamine site; that span reads LGMQ. Catalysis depends on residues His-507 and Glu-509.

The protein belongs to the CTP synthase family. Homotetramer.

The catalysed reaction is UTP + L-glutamine + ATP + H2O = CTP + L-glutamate + ADP + phosphate + 2 H(+). It carries out the reaction L-glutamine + H2O = L-glutamate + NH4(+). The enzyme catalyses UTP + NH4(+) + ATP = CTP + ADP + phosphate + 2 H(+). Its pathway is pyrimidine metabolism; CTP biosynthesis via de novo pathway; CTP from UDP: step 2/2. Allosterically activated by GTP, when glutamine is the substrate; GTP has no effect on the reaction when ammonia is the substrate. The allosteric effector GTP functions by stabilizing the protein conformation that binds the tetrahedral intermediate(s) formed during glutamine hydrolysis. Inhibited by the product CTP, via allosteric rather than competitive inhibition. In terms of biological role, catalyzes the ATP-dependent amination of UTP to CTP with either L-glutamine or ammonia as the source of nitrogen. Regulates intracellular CTP levels through interactions with the four ribonucleotide triphosphates. This is CTP synthase from Tropheryma whipplei (strain TW08/27) (Whipple's bacillus).